The chain runs to 432 residues: Chaperone SurA (432 aa).

The first 26 residues, 1–26 (MKKIASFCSAAVLIASSFLLNNTVQA), serve as a signal peptide directing secretion. PpiC domains are found at residues 176 to 277 (QTEY…KVQD) and 286 to 386 (VQEV…EVTG).

The protein resides in the periplasm. The enzyme catalyses [protein]-peptidylproline (omega=180) = [protein]-peptidylproline (omega=0). Functionally, chaperone involved in the correct folding and assembly of outer membrane proteins. Recognizes specific patterns of aromatic residues and the orientation of their side chains, which are found more frequently in integral outer membrane proteins. May act in both early periplasmic and late outer membrane-associated steps of protein maturation. The chain is Chaperone SurA from Idiomarina loihiensis (strain ATCC BAA-735 / DSM 15497 / L2-TR).